A 1400-amino-acid chain; its full sequence is MNQEIMNLFNPTTPAQVFDQIRISIASPEKILSWSYGEIKKPETINYRTFKPERDGLFCARIFGPIKDYECLCGKYKRMKYKGIICEKCSVEVTLSRVRRERMGHIELAAPVAHIWFLKSLPSRIGQLLDMTLKDLERILYFEYYVVLEPGLTDLKERQLLSEEEYLRAQDQYGQDSFTAMIGAEAIRELLKGLELEKIDAQLRVEMAETDSDIKHKKLAKRLKIVEAFRYSGNKPEWMILTVVPVIPPDLRPLVPLDGGRFATSDLNDLYRRVINRNNRLKRLMELRAPDIIIRNEKRMLQEAVDALFDNGRRGRVITGANKRPLKSLADMLKGKQGRFRQNLLGKRVDYSGRSVIVVGPELKLHQCGLPKKMALELFKPFIYSRLDAKGLSTTVKQAKKLVEKERPEVWDILDEVIREHPVLLNRAPTLHRLGIQAFEPVLIEGKAIQLHPLVCAAFNADFDGDQMAVHVPLSLEAQLEARVLMMSTNNILHPANGQPIIVPSQDIVLGLYYLSILREGLPGEGKVFGDLAELEHALHAKVIHLHTKIKYRWDSLDDEGKPYKRLIETTAGRILLGQVLPKSVKLPYETINKLMTKREISSVIDQVYRHCGQKETVIFCDRIMALGFFNAFKAGISFGKDDMVVPASKWKIVDTTRTLAKDFEQQYNDGLITHGEKYNKVVDAWSKATEEIAKEMMKEISAVRKNASGAESQVNSIYMMAHSGARGSPAQMRQLAGMRGLMAKPSGEIIETPIISNFKEGLSVLEYFNSTHGARKGLADTALKTANSGYLTRRLVDVAQDCIITQDDCGTSLGIKMRAIIDAGTVVASLGSRILGRTAGEDVRDPQTNEVIVKKGELMEERDIEAIHQAGVQEVKIRSALTCELVNGICGKCYGRDLARGTPVNHGEAVGVIAAQSIGEPGTQLTMRTFHIGGAAQINEQSVIESNFEGKVVIKNKAIARNGENHNVAMVRNMVVAIVDPDGTERATHRIQYGARMHVDEGDTIKRGHRIAEWDPYSRPVLTEVEGTIDFEDLIEDQSISETLDESTGIAKRIVIDWRSTRGGADLRPAIVIKGKDGKVLKLARGGDARYMLSVDAILSVDVGAKVKPGDILARISTESAKTRDITGGLPRVAELFEARKPKDAAIIAEIAGTIRFGRDYKNKRRISIEPMDKEEEAREYLIPKGKHIHLQDGDIVEKGDFIVEGNPAPHDILAIKGIEELAAYLVNEIQEVYRLQGVLINDKHIEVIVRQMLQKVEITDQGETDMISGEQIDKIEFDQLNVKARDEGKKIATGTPVLLGITKASLQTRSFFSAASFQETTRVLTEAAVNGKVDPLEGLKENVIVGRLIPAGTGASMAKIREVAMKRDRMILDEREKQATIVPPAAPEAEPLALPPAE.

The Zn(2+) site is built by cysteine 71, cysteine 73, cysteine 86, and cysteine 89. Mg(2+) contacts are provided by aspartate 462, aspartate 464, and aspartate 466. Residues cysteine 810, cysteine 884, cysteine 891, and cysteine 894 each contribute to the Zn(2+) site. The disordered stretch occupies residues 1378-1400 (EKQATIVPPAAPEAEPLALPPAE).

The protein belongs to the RNA polymerase beta' chain family. The RNAP catalytic core consists of 2 alpha, 1 beta, 1 beta' and 1 omega subunit. When a sigma factor is associated with the core the holoenzyme is formed, which can initiate transcription. Mg(2+) serves as cofactor. It depends on Zn(2+) as a cofactor.

The enzyme catalyses RNA(n) + a ribonucleoside 5'-triphosphate = RNA(n+1) + diphosphate. DNA-dependent RNA polymerase catalyzes the transcription of DNA into RNA using the four ribonucleoside triphosphates as substrates. The chain is DNA-directed RNA polymerase subunit beta' from Rhodopseudomonas palustris (strain BisB5).